We begin with the raw amino-acid sequence, 154 residues long: Small ribosomal subunit protein uS7 (154 aa).

The protein belongs to the universal ribosomal protein uS7 family.

The polypeptide is Small ribosomal subunit protein uS7 (RPS5) (Nicotiana plumbaginifolia (Leadwort-leaved tobacco)).